The following is a 589-amino-acid chain: PTS system mannitol-specific EIICB component (589 aa).

Residues 1–25 (MERKSSLKVRVQKLGTSLSNMVMPN) are Cytoplasmic-facing. Residues 14–347 (LGTSLSNMVM…ILKSDNSDDD (334 aa)) form the PTS EIIC type-2 domain. The chain crosses the membrane as a helical span at residues 26 to 47 (IGAFIAWGVAASLFIATGYLPN). Topologically, residues 48 to 51 (KALD) are extracellular. Residues 52–73 (TNVVGPMLKYVLPLLIGYTGGY) form a helical membrane-spanning segment. The Cytoplasmic portion of the chain corresponds to 74 to 136 (NIHKQRGGVI…TGFEMLVNNF (63 aa)). Residues 137-158 (SLGLIGFALMVLAFFVIGPVVA) form a helical membrane-spanning segment. Topologically, residues 159 to 167 (QLTEWVGIG) are extracellular. The helical transmembrane segment at 168 to 188 (VEAIVKVHLLPLANLIIEPAK) threads the bilayer. The Cytoplasmic segment spans residues 189–275 (ILFLNNALNH…VMMKPAMFLA (87 aa)). A helical membrane pass occupies residues 276–295 (VIAGGLTGTFTFQTLGAGLT). Residues 296 to 317 (APASPGSIIAIMGMSPKGWGPH) are Extracellular-facing. Residues 318–339 (LVVLAGVFAAAVASFLVASIIL) traverse the membrane as a helical segment. At 340–589 (KSDNSDDDSL…YDKLVARMHK (250 aa)) the chain is on the cytoplasmic side. Residues 383–478 (HQIIFACDAG…SLTNGKASGS (96 aa)) form the PTS EIIB type-2 domain. The active-site Phosphocysteine intermediate; for EIIB activity is Cys389. Phosphocysteine; by EIIA is present on Cys389.

Homodimer.

The protein localises to the cell membrane. It catalyses the reaction D-mannitol(out) + N(pros)-phospho-L-histidyl-[protein] = D-mannitol 1-phosphate(in) + L-histidyl-[protein]. Functionally, the phosphoenolpyruvate-dependent sugar phosphotransferase system (sugar PTS), a major carbohydrate active transport system, catalyzes the phosphorylation of incoming sugar substrates concomitantly with their translocation across the cell membrane. The enzyme II CmtAB PTS system is involved in D-mannitol transport. The chain is PTS system mannitol-specific EIICB component from Streptococcus mutans serotype c (strain ATCC 700610 / UA159).